A 396-amino-acid chain; its full sequence is Elongation factor Tu 2 (396 aa).

The 197-residue stretch at 10–206 (KPHVNVGTIG…ALDTYIPTPE (197 aa)) folds into the tr-type G domain. The interval 19–26 (GHVDHGKT) is G1. GTP is bound at residue 19-26 (GHVDHGKT). T26 is a Mg(2+) binding site. The interval 60 to 64 (GITIN) is G2. Positions 81-84 (DCPG) are G3. GTP contacts are provided by residues 81-85 (DCPGH) and 136-139 (NKAD). A G4 region spans residues 136–139 (NKAD). The G5 stretch occupies residues 174-176 (SAK).

It belongs to the TRAFAC class translation factor GTPase superfamily. Classic translation factor GTPase family. EF-Tu/EF-1A subfamily. In terms of assembly, monomer.

The protein resides in the cytoplasm. It catalyses the reaction GTP + H2O = GDP + phosphate + H(+). GTP hydrolase that promotes the GTP-dependent binding of aminoacyl-tRNA to the A-site of ribosomes during protein biosynthesis. The protein is Elongation factor Tu 2 of Methylobacillus flagellatus (strain ATCC 51484 / DSM 6875 / VKM B-1610 / KT).